Consider the following 589-residue polypeptide: Serine/threonine-protein kinase PknJ (589 aa).

Over 1 to 342 (MAHELSAGSV…LPRRPRRYRR (342 aa)) the chain is Cytoplasmic. Residues 14-276 (YRIERMLGAG…SAGEFAHAAA (263 aa)) enclose the Protein kinase domain. ATP-binding positions include 20–28 (LGAGGMGTV) and Lys43. Asp136 (proton acceptor) is an active-site residue. A helical membrane pass occupies residues 343–363 (GVAAVAAVMVVAAAAVTAVTM). The Extracellular portion of the chain corresponds to 364 to 589 (TSHQPRTATP…TNYILAKIPG (226 aa)). Positions 365–387 (SHQPRTATPPSAAALSPTSSSTT) are enriched in low complexity. Positions 365–400 (SHQPRTATPPSAAALSPTSSSTTPPQPPIVTRSRLP) are disordered.

Belongs to the protein kinase superfamily. Ser/Thr protein kinase family. Homodimer.

It is found in the cell membrane. It carries out the reaction L-seryl-[protein] + ATP = O-phospho-L-seryl-[protein] + ADP + H(+). It catalyses the reaction L-threonyl-[protein] + ATP = O-phospho-L-threonyl-[protein] + ADP + H(+). In Mycobacterium bovis (strain ATCC BAA-935 / AF2122/97), this protein is Serine/threonine-protein kinase PknJ (pknJ).